Consider the following 525-residue polypeptide: Probable feruloyl esterase B-1 (525 aa).

A signal peptide spans 1–20 (MMRWFLLIGLASAAATDSSA). Disulfide bonds link C26/C75, C61/C114, C187/C442, C256/C273, C282/C292, and C502/C524. N-linked (GlcNAc...) asparagine glycosylation is found at N51, N80, and N98. The Acyl-ester intermediate role is filled by S188. D257, D260, A262, and D264 together coordinate Ca(2+). 3 N-linked (GlcNAc...) asparagine glycosylation sites follow: N283, N288, and N351. Catalysis depends on charge relay system residues D401 and H441.

The protein belongs to the tannase family.

The protein localises to the secreted. The catalysed reaction is feruloyl-polysaccharide + H2O = ferulate + polysaccharide.. Its function is as follows. Involved in degradation of plant cell walls. Hydrolyzes the feruloyl-arabinose ester bond in arabinoxylans as well as the feruloyl-galactose and feruloyl-arabinose ester bonds in pectin. This chain is Probable feruloyl esterase B-1 (faeB-1), found in Neosartorya fischeri (strain ATCC 1020 / DSM 3700 / CBS 544.65 / FGSC A1164 / JCM 1740 / NRRL 181 / WB 181) (Aspergillus fischerianus).